A 125-amino-acid chain; its full sequence is Small ribosomal subunit protein uS13 (125 aa).

It belongs to the universal ribosomal protein uS13 family. As to quaternary structure, part of the 30S ribosomal subunit. Forms a loose heterodimer with protein S19. Forms two bridges to the 50S subunit in the 70S ribosome.

Functionally, located at the top of the head of the 30S subunit, it contacts several helices of the 16S rRNA. In the 70S ribosome it contacts the 23S rRNA (bridge B1a) and protein L5 of the 50S subunit (bridge B1b), connecting the 2 subunits; these bridges are implicated in subunit movement. Contacts the tRNAs in the A and P-sites. The protein is Small ribosomal subunit protein uS13 of Orientia tsutsugamushi (strain Boryong) (Rickettsia tsutsugamushi).